The following is a 211-amino-acid chain: Uracil phosphoribosyltransferase (211 aa).

5-phospho-alpha-D-ribose 1-diphosphate contacts are provided by residues R78, R103, and D130 to T138. Residues I195 and G200 to A202 each bind uracil. A 5-phospho-alpha-D-ribose 1-diphosphate-binding site is contributed by D201.

The protein belongs to the UPRTase family. Mg(2+) is required as a cofactor.

It catalyses the reaction UMP + diphosphate = 5-phospho-alpha-D-ribose 1-diphosphate + uracil. The protein operates within pyrimidine metabolism; UMP biosynthesis via salvage pathway; UMP from uracil: step 1/1. Allosterically activated by GTP. Functionally, catalyzes the conversion of uracil and 5-phospho-alpha-D-ribose 1-diphosphate (PRPP) to UMP and diphosphate. This is Uracil phosphoribosyltransferase from Arthrobacter sp. (strain FB24).